A 223-amino-acid polypeptide reads, in one-letter code: 7-cyano-7-deazaguanine synthase (223 aa).

15–25 (FSGGQDSTTCL) is an ATP binding site. 4 residues coordinate Zn(2+): Cys-191, Cys-200, Cys-203, and Cys-206.

Belongs to the QueC family. In terms of assembly, homodimer. The cofactor is Zn(2+).

The catalysed reaction is 7-carboxy-7-deazaguanine + NH4(+) + ATP = 7-cyano-7-deazaguanine + ADP + phosphate + H2O + H(+). The protein operates within purine metabolism; 7-cyano-7-deazaguanine biosynthesis. Its function is as follows. Catalyzes the ATP-dependent conversion of 7-carboxy-7-deazaguanine (CDG) to 7-cyano-7-deazaguanine (preQ(0)). The polypeptide is 7-cyano-7-deazaguanine synthase (Staphylococcus saprophyticus subsp. saprophyticus (strain ATCC 15305 / DSM 20229 / NCIMB 8711 / NCTC 7292 / S-41)).